The sequence spans 327 residues: dTDP-4-dehydrorhamnose reductase (327 aa).

The disordered stretch occupies residues 1-22; the sequence is MDLINGMGTSPGYWRTPREPGN. NADH is bound by residues 43–45, 69–70, and 91–93; these read GMV, DI, and AYT. NADPH-binding positions include 44–45, 69–70, and 91–93; these read MV, DI, and AYT. 132–133 contributes to the dTDP-beta-L-rhamnose binding site; sequence TD. Positions 157 and 161 each coordinate NADH. The NADPH site is built by tyrosine 157 and lysine 161. The active-site Proton donor/acceptor is the tyrosine 157. Residue tryptophan 182 coordinates dTDP-beta-L-rhamnose. Basic and acidic residues predominate over residues 264 to 276; sequence PERVRPCGSDRHP. A disordered region spans residues 264-292; the sequence is PERVRPCGSDRHPRPAPRPSYTVLSSQRS.

The protein belongs to the dTDP-4-dehydrorhamnose reductase family. Mg(2+) is required as a cofactor.

The catalysed reaction is dTDP-beta-L-rhamnose + NADP(+) = dTDP-4-dehydro-beta-L-rhamnose + NADPH + H(+). It functions in the pathway carbohydrate biosynthesis; dTDP-L-rhamnose biosynthesis. In terms of biological role, involved in the biosynthesis of the dTDP-L-rhamnose which is a component of the critical linker, D-N-acetylglucosamine-L-rhamnose disaccharide, which connects the galactan region of arabinogalactan to peptidoglycan via a phosphodiester linkage. Catalyzes the reduction of dTDP-6-deoxy-L-lyxo-4-hexulose to yield dTDP-L-rhamnose. In Mycolicibacterium smegmatis (strain ATCC 700084 / mc(2)155) (Mycobacterium smegmatis), this protein is dTDP-4-dehydrorhamnose reductase.